The primary structure comprises 64 residues: Small ribosomal subunit protein eS17 (64 aa).

It belongs to the eukaryotic ribosomal protein eS17 family.

The protein is Small ribosomal subunit protein eS17 of Methanocorpusculum labreanum (strain ATCC 43576 / DSM 4855 / Z).